Reading from the N-terminus, the 392-residue chain is Lipid-A-disaccharide synthase (392 aa).

This sequence belongs to the LpxB family.

It catalyses the reaction a lipid X + a UDP-2-N,3-O-bis[(3R)-3-hydroxyacyl]-alpha-D-glucosamine = a lipid A disaccharide + UDP + H(+). The protein operates within bacterial outer membrane biogenesis; LPS lipid A biosynthesis. Its function is as follows. Condensation of UDP-2,3-diacylglucosamine and 2,3-diacylglucosamine-1-phosphate to form lipid A disaccharide, a precursor of lipid A, a phosphorylated glycolipid that anchors the lipopolysaccharide to the outer membrane of the cell. This Prochlorococcus marinus (strain MIT 9313) protein is Lipid-A-disaccharide synthase.